Consider the following 376-residue polypeptide: Alcohol dehydrogenase 6 (376 aa).

Zn(2+)-binding residues include Cys47, His69, Cys99, Cys102, Cys105, Cys113, and Cys175. NAD(+) is bound by residues 200 to 205, Asp224, Arg229, 293 to 295, and Arg371; these read GLGGVG and VGA.

This sequence belongs to the zinc-containing alcohol dehydrogenase family. Class-V subfamily. Dimer. It depends on Zn(2+) as a cofactor.

It is found in the cytoplasm. It catalyses the reaction a primary alcohol + NAD(+) = an aldehyde + NADH + H(+). The enzyme catalyses a secondary alcohol + NAD(+) = a ketone + NADH + H(+). Functionally, alcohol dehydrogenase. Catalyzes the NAD-dependent oxidation of primary alcohols to the corresponding aldehydes. Oxidizes secondary alcohols to the corresponding ketones. The chain is Alcohol dehydrogenase 6 (Adh6) from Rattus norvegicus (Rat).